Here is a 62-residue protein sequence, read N- to C-terminus: UPF0337 protein mll8179 (62 aa).

The disordered stretch occupies residues 1 to 42 (MRNMVNKDQVAGLAKQLKGSVKQAAGKATGNRRTQAEGMADK).

It belongs to the UPF0337 (CsbD) family.

The protein is UPF0337 protein mll8179 of Mesorhizobium japonicum (strain LMG 29417 / CECT 9101 / MAFF 303099) (Mesorhizobium loti (strain MAFF 303099)).